The primary structure comprises 342 residues: Probable transposase for insertion-like sequence element IS1161 (342 aa).

The Integrase catalytic domain occupies 182–342 (IEERPEEINN…KKLFELTQTA (161 aa)).

This sequence belongs to the transposase IS30 family.

Its function is as follows. Required for the transposition of the insertion element. In Streptococcus salivarius, this protein is Probable transposase for insertion-like sequence element IS1161.